The primary structure comprises 73 residues: Conotoxin CnIIIF (73 aa).

A signal peptide spans 1–19 (MSKLGVLLTICLLLFPLTA). Residues 20-51 (LPMDGDQSVDRPAERMQDDISSGQHPLFNQKR) constitute a propeptide that is removed on maturation. Cystine bridges form between C53–C72, C54–C70, and C60–C73.

This sequence belongs to the conotoxin M superfamily. As to expression, expressed by the venom duct.

Its subcellular location is the secreted. Functionally, shows a paralytic effect in fish. The protein is Conotoxin CnIIIF of Conus consors (Singed cone).